Consider the following 1122-residue polypeptide: RecBCD enzyme subunit RecC (1122 aa).

The protein belongs to the RecC family. Heterotrimer of RecB, RecC and RecD. All subunits contribute to DNA-binding. Interacts with YgbT (Cas1). In terms of assembly, (Microbial infection) Lambda virus GamS protein interacts with the enzyme without displacing any of the subunits.

After reacting with DNA bearing a Chi site the holoenzyme is disassembled and loses exonuclease activity, DNA unwinding and Chi-directed DNA cleavage; RecB remains complexed with ssDNA, which may prevent holoenzyme reassembly. High levels of Mg(2+) (13 mM MgCl(2+)) or incubation with DNase allow holoenzyme reassembly, suggesting it is DNA bound to RecB that prevents reassembly. With respect to regulation, (Microbial infection) RecBCD is inhibited by the lambda virus gam protein (both GamL and GamS isoforms); in vitro a short preincubation prior to adding DNA results in maximal inhibition. In terms of biological role, a helicase/nuclease that prepares dsDNA breaks (DSB) for recombinational DNA repair. Binds to DSBs and unwinds DNA via a rapid (&gt;1 kb/second) and highly processive (&gt;30 kb) ATP-dependent bidirectional helicase. Unwinds dsDNA until it encounters a Chi (crossover hotspot instigator, 5'-GCTGGTGG-3') sequence from the 3' direction. Cuts ssDNA a few nucleotides 3' to Chi site, by nicking one strand or switching the strand degraded (depending on the reaction conditions). The properties and activities of the enzyme are changed at Chi. The Chi-altered holoenzyme produces a long 3'-ssDNA overhang which facilitates RecA-binding to the ssDNA for homologous DNA recombination and repair. Holoenzyme degrades any linearized DNA that is unable to undergo homologous recombination. In the holoenzyme this subunit almost certainly recognizes the wild-type Chi sequence, when added to isolated RecB increases its ATP-dependent helicase processivity. The RecBC complex requires the RecD subunit for nuclease activity, but can translocate along ssDNA in both directions. The RecBCD complex does not unwind G-quadruplex DNA. The protein is RecBCD enzyme subunit RecC of Escherichia coli (strain K12).